Consider the following 353-residue polypeptide: sn-glycerol-3-phosphate import ATP-binding protein UgpC 3 (353 aa).

The region spanning 4–235 is the ABC transporter domain; sequence IALKDVRKVY…PATTFVATFI (232 aa). 37–44 provides a ligand contact to ATP; it reads GPSGCGKS.

The protein belongs to the ABC transporter superfamily. sn-glycerol-3-phosphate importer (TC 3.A.1.1.3) family. In terms of assembly, the complex is composed of two ATP-binding proteins (UgpC), two transmembrane proteins (UgpA and UgpE) and a solute-binding protein (UgpB).

The protein resides in the cell inner membrane. The enzyme catalyses sn-glycerol 3-phosphate(out) + ATP + H2O = sn-glycerol 3-phosphate(in) + ADP + phosphate + H(+). Part of the ABC transporter complex UgpBAEC involved in sn-glycerol-3-phosphate (G3P) import. Responsible for energy coupling to the transport system. The protein is sn-glycerol-3-phosphate import ATP-binding protein UgpC 3 of Agrobacterium fabrum (strain C58 / ATCC 33970) (Agrobacterium tumefaciens (strain C58)).